A 416-amino-acid polypeptide reads, in one-letter code: CinA-like protein (416 aa).

It belongs to the CinA family.

This chain is CinA-like protein, found in Thermosynechococcus vestitus (strain NIES-2133 / IAM M-273 / BP-1).